The following is a 536-amino-acid chain: Multicopper oxidase terE (536 aa).

Residues methionine 1–serine 21 are disordered. 3 consecutive Plastocyanin-like domains span residues methionine 1–lysine 67, glutamate 79–asparagine 238, and threonine 354–methionine 488. Positions 2, 4, 48, and 50 each coordinate Cu cation. Histidine 397 is a Cu cation binding site.

The protein belongs to the multicopper oxidase family.

The protein operates within secondary metabolite biosynthesis. Multicopper oxidase; part of the gene cluster that mediates the biosynthesis of terrein, a fungal metabolite with ecological, antimicrobial, antiproliferative, and antioxidative activities. The first step in the pathway is performed by the polyketide synthase terA that produces 4-hydroxy-6-methylpyranon (4-HMP), orsellinic acid (OA), and 2,3-dehydro-6-hydroxymellein (2,3-dehydro-6-HM) by condensing acetyl-CoA with two, three, or four malonyl-CoA units, respectively. 4-HMP and OA are not pathway intermediates, but are rather shunt or side products. 2,3-dehydro-6-HM is further converted to 6-hydroxymellein (6-HM) by the 6-hydroxymellein synthase terB. The monooxygenases terC and terD, the multicopper oxidase terE and the Kelch-like protein terF are then involved in the transformation of 6-HM to terrein. Even if they are co-regulated with the other terrein cluster genes, terH and terI seem to be dispensable for terrein production; whereas one or both of the 2 transporters terG and terJ are probably required for efficient secretion of metabolites. The sequence is that of Multicopper oxidase terE from Aspergillus terreus (strain NIH 2624 / FGSC A1156).